Consider the following 498-residue polypeptide: Pentatricopeptide repeat-containing protein At3g61360 (498 aa).

PPR repeat units follow at residues 102 to 132, 138 to 172, 175 to 205, 209 to 243, 244 to 278, 279 to 313, 314 to 348, 349 to 385, and 386 to 420; these read TSDSFEKTLHILARMRYFDQAWALMAEVRKD, SFKSMSILLCKIAKFGSYEETLEAFVKMEKEIFRK, GVDEFNILLRAFCTEREMKEARSIFEKLHSR, DVKTMNILLLGFKEAGDVTATELFYHEMVKRGFKP, NSVTYGIRIDGFCKKRNFGEALRLFEDMDRLDFDI, TVQILTTLIHGSGVARNKIKARQLFDEISKRGLTP, DCGAYNALMSSLMKCGDVSGAIKVMKEMEEKGIEP, DSVTFHSMFIGMMKSKEFGFNGVCEYYQKMKERSLVP, and KTPTIVMLMKLFCHNGEVNLGLDLWKYMLEKGYCP.

The protein belongs to the PPR family. P subfamily.

The polypeptide is Pentatricopeptide repeat-containing protein At3g61360 (Arabidopsis thaliana (Mouse-ear cress)).